Consider the following 482-residue polypeptide: GDP-D-glucose phosphorylase 1 (482 aa).

The disordered stretch occupies residues 1–21 (MEPFPRILDDRLPRNMRRPRP). H255 acts as the Tele-GMP-histidine intermediate in catalysis. Residues 461–482 (MPRSPSIRHRSSTRAQSDEGSK) form a disordered region.

This sequence belongs to the GDPGP1 family. In terms of tissue distribution, expressed throughout the neuronal system, in the spermatheca and anterior hypodermal cells.

It localises to the cytoplasm. It catalyses the reaction GDP-alpha-D-glucose + phosphate = alpha-D-glucose 1-phosphate + GDP + H(+). Specific and highly efficient GDP-D-glucose phosphorylase regulating the levels of GDP-D-glucose in cells. The chain is GDP-D-glucose phosphorylase 1 from Caenorhabditis elegans.